The primary structure comprises 348 residues: MASREDELRNCVVCGDQATGYHFNALTCEGCKGFFRRTVSKSIGPTCPFAGSCEVSKTQRRHCPACRLQKCLDAGMRKDMILSAEALALRRAKQAQRRAQQTPVQLSKEQEELIRTLLGAHTRHMGTMFEQFVQFRPPAHLFIHHQPLPTLAPVLPLVTHFADINTFMVLQVIKFTKDLPVFRSLPIEDQISLLKGAAVEICHIVLNTTFCLQTQNFLCGPLRYTIEDGARVGFQVEFLELLFHFHGTLRKLQLQEPEYVLLAAMALFSPDRPGVTQRDEIDQLQEEMALTLQSYIKGQQRRPRDRFLYAKLLGLLAELRSINEAYGYQIQHIQGLSAMMPLLQEICS.

A DNA-binding region (nuclear receptor) is located at residues L8–S83. The segment at C11–C31 adopts an NR C4-type zinc-finger fold. T38 carries the post-translational modification Phosphothreonine; by PKC. The segment at C47–C71 adopts an NR C4-type zinc-finger fold. Positions E109 to S348 constitute an NR LBD domain.

It belongs to the nuclear hormone receptor family. NR1 subfamily. Heterodimer of NR1I3 and RXR. Interacts with PSMC4. Interacts with ECT2. Directly interacts with DNAJC7; this complex may also include HSP90. Interacts with CRY1. Interacts with CRY2 in a ligand-dependent manner. Phosphorylated at Thr-38 by PKC, dephosphorylation of Thr-38 is required for nuclear translocation and activation.

The protein resides in the nucleus. Its subcellular location is the cytoplasm. It is found in the cytoskeleton. Functionally, binds and transactivates the retinoic acid response elements that control expression of the retinoic acid receptor beta 2 and alcohol dehydrogenase 3 genes. Transactivates both the phenobarbital responsive element module of the human CYP2B6 gene and the CYP3A4 xenobiotic response element. The sequence is that of Nuclear receptor subfamily 1 group I member 3 (NR1I3) from Pan troglodytes (Chimpanzee).